A 985-amino-acid polypeptide reads, in one-letter code: Bifunctional glutamine synthetase adenylyltransferase/adenylyl-removing enzyme (985 aa).

An adenylyl removase region spans residues 1 to 460; that stretch reads MSLPSLADFP…HFRQVIADPD (460 aa). The tract at residues 476–985 is adenylyl transferase; that stretch reads GGEWLPLWEE…MRIWAQMGLS (510 aa).

Belongs to the GlnE family. Requires Mg(2+) as cofactor.

The enzyme catalyses [glutamine synthetase]-O(4)-(5'-adenylyl)-L-tyrosine + phosphate = [glutamine synthetase]-L-tyrosine + ADP. It carries out the reaction [glutamine synthetase]-L-tyrosine + ATP = [glutamine synthetase]-O(4)-(5'-adenylyl)-L-tyrosine + diphosphate. Involved in the regulation of glutamine synthetase GlnA, a key enzyme in the process to assimilate ammonia. When cellular nitrogen levels are high, the C-terminal adenylyl transferase (AT) inactivates GlnA by covalent transfer of an adenylyl group from ATP to specific tyrosine residue of GlnA, thus reducing its activity. Conversely, when nitrogen levels are low, the N-terminal adenylyl removase (AR) activates GlnA by removing the adenylyl group by phosphorolysis, increasing its activity. The regulatory region of GlnE binds the signal transduction protein PII (GlnB) which indicates the nitrogen status of the cell. The chain is Bifunctional glutamine synthetase adenylyltransferase/adenylyl-removing enzyme from Pseudomonas syringae pv. tomato (strain ATCC BAA-871 / DC3000).